The chain runs to 97 residues: HssA/B-like protein 32 (97 aa).

Disordered stretches follow at residues 1–23 and 62–97; these read MTLF…SLAS and AKSS…GSCS. Residues 62–74 show a composition bias toward gly residues; the sequence is AKSSGGSCGGKGG. Basic residues predominate over residues 75–88; that stretch reads SHNHGHGHGPHGHG.

The protein belongs to the hssA/B family.

In Dictyostelium discoideum (Social amoeba), this protein is HssA/B-like protein 32 (hssl32).